Here is a 152-residue protein sequence, read N- to C-terminus: MDEQEIQRLVEEVSLQYFGMPFLHKALFNSRLRTTGGRYLLNTHNIELNYRYYEMYGKEELVGIVKHELCHYHLHITGRGYKHRDKDFRELLKAVDAPRFCKRMMNEEKEKKVYMYECMGCSLQYVRRRQINTKRYVCGKCKGKLILIKKTS.

A SprT-like domain is found at 7–148; it reads QRLVEEVSLQ…GKCKGKLILI (142 aa). Residue His-67 participates in Zn(2+) binding. Glu-68 is an active-site residue. His-71 contacts Zn(2+).

Belongs to the SprT family. It depends on Zn(2+) as a cofactor.

The protein localises to the cytoplasm. This chain is Protein SprT-like, found in Bacillus cereus (strain ATCC 10987 / NRS 248).